Here is a 69-residue protein sequence, read N- to C-terminus: Cytochrome c oxidase subunit 8A, mitochondrial (69 aa).

The transit peptide at 1–25 (MSVLTPLLLRGLTGSARRLPVPRAK) directs the protein to the mitochondrion. The SIFI-degron motif lies at 2-19 (SVLTPLLLRGLTGSARRL). The Mitochondrial matrix segment spans residues 26-36 (IHSLPPDEKLG). The helical transmembrane segment at 37-60 (IMELAVGLTSCFVTFLLPAGWILS) threads the bilayer. At 61-69 (HLETYRRPE) the chain is on the mitochondrial intermembrane side.

The protein belongs to the cytochrome c oxidase VIII family. Component of the cytochrome c oxidase (complex IV, CIV), a multisubunit enzyme composed of 14 subunits. The complex is composed of a catalytic core of 3 subunits MT-CO1, MT-CO2 and MT-CO3, encoded in the mitochondrial DNA, and 11 supernumerary subunits COX4I, COX5A, COX5B, COX6A, COX6B, COX6C, COX7A, COX7B, COX7C, COX8 and NDUFA4, which are encoded in the nuclear genome. The complex exists as a monomer or a dimer and forms supercomplexes (SCs) in the inner mitochondrial membrane with NADH-ubiquinone oxidoreductase (complex I, CI) and ubiquinol-cytochrome c oxidoreductase (cytochrome b-c1 complex, complex III, CIII), resulting in different assemblies (supercomplex SCI(1)III(2)IV(1) and megacomplex MCI(2)III(2)IV(2)). In response to mitochondrial stress, the precursor protein is ubiquitinated by the SIFI complex in the cytoplasm before mitochondrial import, leading to its degradation. Within the SIFI complex, UBR4 initiates ubiquitin chain that are further elongated or branched by KCMF1.

The protein resides in the mitochondrion inner membrane. It participates in energy metabolism; oxidative phosphorylation. In terms of biological role, component of the cytochrome c oxidase, the last enzyme in the mitochondrial electron transport chain which drives oxidative phosphorylation. The respiratory chain contains 3 multisubunit complexes succinate dehydrogenase (complex II, CII), ubiquinol-cytochrome c oxidoreductase (cytochrome b-c1 complex, complex III, CIII) and cytochrome c oxidase (complex IV, CIV), that cooperate to transfer electrons derived from NADH and succinate to molecular oxygen, creating an electrochemical gradient over the inner membrane that drives transmembrane transport and the ATP synthase. Cytochrome c oxidase is the component of the respiratory chain that catalyzes the reduction of oxygen to water. Electrons originating from reduced cytochrome c in the intermembrane space (IMS) are transferred via the dinuclear copper A center (CU(A)) of subunit 2 and heme A of subunit 1 to the active site in subunit 1, a binuclear center (BNC) formed by heme A3 and copper B (CU(B)). The BNC reduces molecular oxygen to 2 water molecules using 4 electrons from cytochrome c in the IMS and 4 protons from the mitochondrial matrix. The chain is Cytochrome c oxidase subunit 8A, mitochondrial (COX8A) from Gorilla gorilla gorilla (Western lowland gorilla).